A 61-amino-acid chain; its full sequence is Metallothionein-2A (61 aa).

An N-acetylmethionine modification is found at M1. The beta stretch occupies residues 1–29; it reads MDPNCSCAAGGSCTCAGSCKCKDCKCTSC. Residues C5, C7, C13, C15, C19, C21, C24, C26, C29, C33, C34, C36, C37, C41, C44, C48, C50, and C57 each coordinate a divalent metal cation. Positions 30-61 are alpha; it reads KKSCCSCCPVGCAKCAQGCICKGASDKCSCCA. S58 bears the Phosphoserine mark. The a divalent metal cation site is built by C59 and C60.

Belongs to the metallothionein superfamily. Type 1 family. Interacts with EOLA1.

Metallothioneins have a high content of cysteine residues that bind various heavy metals; these proteins are transcriptionally regulated by both heavy metals and glucocorticoids. This is Metallothionein-2A (MT2A) from Sus scrofa (Pig).